The primary structure comprises 549 residues: Glucose-6-phosphate isomerase (549 aa).

The active-site Proton donor is glutamate 353. Residues histidine 384 and lysine 513 contribute to the active site.

Belongs to the GPI family.

The protein localises to the cytoplasm. It catalyses the reaction alpha-D-glucose 6-phosphate = beta-D-fructose 6-phosphate. The protein operates within carbohydrate biosynthesis; gluconeogenesis. Its pathway is carbohydrate degradation; glycolysis; D-glyceraldehyde 3-phosphate and glycerone phosphate from D-glucose: step 2/4. Functionally, catalyzes the reversible isomerization of glucose-6-phosphate to fructose-6-phosphate. The protein is Glucose-6-phosphate isomerase of Brucella abortus (strain S19).